Reading from the N-terminus, the 170-residue chain is Nicotinamide-nucleotide adenylyltransferase (170 aa).

Belongs to the archaeal NMN adenylyltransferase family.

It is found in the cytoplasm. The catalysed reaction is beta-nicotinamide D-ribonucleotide + ATP + H(+) = diphosphate + NAD(+). Its pathway is cofactor biosynthesis; NAD(+) biosynthesis; NAD(+) from nicotinamide D-ribonucleotide: step 1/1. The sequence is that of Nicotinamide-nucleotide adenylyltransferase from Methanothrix thermoacetophila (strain DSM 6194 / JCM 14653 / NBRC 101360 / PT) (Methanosaeta thermophila).